Reading from the N-terminus, the 319-residue chain is Histone-lysine N-methyltransferase set5 (319 aa).

One can recognise an SET domain in the interval 4-141; that stretch reads YETEIYKVVP…AGEEILTTYI (138 aa). A Phosphoserine modification is found at S316. T318 is subject to Phosphothreonine.

This sequence belongs to the class V-like SAM-binding methyltransferase superfamily.

Its subcellular location is the nucleus. The protein localises to the chromosome. The protein resides in the cytoplasm. It carries out the reaction L-lysyl-[histone] + S-adenosyl-L-methionine = N(6)-methyl-L-lysyl-[histone] + S-adenosyl-L-homocysteine + H(+). Functionally, histone methyltransferase that monomethylates 'Lys-5', 'Lys-8' and 'Lys-12' of histone H4 (H4K5me1, H4K8me1 and H4K12me1, respectively), thereby controlling gene expression and remodeling chromatin structures. Monomethylation of 'Lys-5' of histone H4 (H4K5me1) is required for subsequent acetylation and formation of N6-acetyl-N6-methyllysine (H4K5acme). The polypeptide is Histone-lysine N-methyltransferase set5 (set5) (Schizosaccharomyces pombe (strain 972 / ATCC 24843) (Fission yeast)).